Here is a 262-residue protein sequence, read N- to C-terminus: Acyl-[acyl-carrier-protein]--UDP-N-acetylglucosamine O-acyltransferase (262 aa).

This sequence belongs to the transferase hexapeptide repeat family. LpxA subfamily. Homotrimer.

The protein localises to the cytoplasm. The catalysed reaction is a (3R)-hydroxyacyl-[ACP] + UDP-N-acetyl-alpha-D-glucosamine = a UDP-3-O-[(3R)-3-hydroxyacyl]-N-acetyl-alpha-D-glucosamine + holo-[ACP]. The protein operates within glycolipid biosynthesis; lipid IV(A) biosynthesis; lipid IV(A) from (3R)-3-hydroxytetradecanoyl-[acyl-carrier-protein] and UDP-N-acetyl-alpha-D-glucosamine: step 1/6. Involved in the biosynthesis of lipid A, a phosphorylated glycolipid that anchors the lipopolysaccharide to the outer membrane of the cell. The protein is Acyl-[acyl-carrier-protein]--UDP-N-acetylglucosamine O-acyltransferase of Photorhabdus laumondii subsp. laumondii (strain DSM 15139 / CIP 105565 / TT01) (Photorhabdus luminescens subsp. laumondii).